A 513-amino-acid chain; its full sequence is ATP synthase subunit alpha (513 aa).

169 to 176 contacts ATP; sequence GDRQTGKT.

The protein belongs to the ATPase alpha/beta chains family. As to quaternary structure, F-type ATPases have 2 components, CF(1) - the catalytic core - and CF(0) - the membrane proton channel. CF(1) has five subunits: alpha(3), beta(3), gamma(1), delta(1), epsilon(1). CF(0) has three main subunits: a(1), b(2) and c(9-12). The alpha and beta chains form an alternating ring which encloses part of the gamma chain. CF(1) is attached to CF(0) by a central stalk formed by the gamma and epsilon chains, while a peripheral stalk is formed by the delta and b chains.

It localises to the cell inner membrane. The enzyme catalyses ATP + H2O + 4 H(+)(in) = ADP + phosphate + 5 H(+)(out). In terms of biological role, produces ATP from ADP in the presence of a proton gradient across the membrane. The alpha chain is a regulatory subunit. The sequence is that of ATP synthase subunit alpha from Ralstonia pickettii (strain 12J).